Reading from the N-terminus, the 241-residue chain is Demethylmenaquinone methyltransferase (241 aa).

S-adenosyl-L-methionine-binding positions include T60, D81, and 106-107; that span reads DA.

The protein belongs to the class I-like SAM-binding methyltransferase superfamily. MenG/UbiE family.

It catalyses the reaction a 2-demethylmenaquinol + S-adenosyl-L-methionine = a menaquinol + S-adenosyl-L-homocysteine + H(+). Its pathway is quinol/quinone metabolism; menaquinone biosynthesis; menaquinol from 1,4-dihydroxy-2-naphthoate: step 2/2. Methyltransferase required for the conversion of demethylmenaquinol (DMKH2) to menaquinol (MKH2). The protein is Demethylmenaquinone methyltransferase of Staphylococcus epidermidis (strain ATCC 35984 / DSM 28319 / BCRC 17069 / CCUG 31568 / BM 3577 / RP62A).